A 458-amino-acid chain; its full sequence is Opine oxidase subunit A (458 aa).

The protein to T-protein and to dimethylglycine dehydrogenase. In terms of assembly, heterodimer of a subunit A and a subunit B.

The protein operates within opine metabolism; octopine degradation. Its function is as follows. Oxidative cleavage of octopine into L-arginine and pyruvate. This Rhizobium meliloti (strain 1021) (Ensifer meliloti) protein is Opine oxidase subunit A (ooxA).